The sequence spans 806 residues: Volume-regulated anion channel subunit LRRC8E (806 aa).

The Cytoplasmic portion of the chain corresponds to 1-22; it reads MIPVAEFKQFTEQQPAFKVLKP. A helical membrane pass occupies residues 23-43; sequence WWDVLAEYITYAMLMIGVFGC. Topologically, residues 44–130 are extracellular; sequence TLQVTQDKII…YETALHWYAK (87 aa). A disulfide bridge connects residues Cys-54 and Cys-311. N-linked (GlcNAc...) asparagine glycosylation is found at Asn-57 and Asn-80. Over residues 72–81 the composition is skewed to polar residues; it reads YDQQSPPSND. Positions 72–103 are disordered; the sequence is YDQQSPPSNDSDLETTIPPPTATSSPPREMSG. A helical membrane pass occupies residues 131-151; that stretch reads YFPYLVVIHTLIFIICGNFWF. At 152–275 the chain is on the cytoplasmic side; the sequence is KFPGTSSKIE…MRQTVLKVCK (124 aa). Residues 182 to 213 form a disordered region; sequence EVSGESSQEKPSQERSIDRELSKPNFEEGSPA. The segment covering 188-207 has biased composition (basic and acidic residues); it reads SQEKPSQERSIDRELSKPNF. A helical membrane pass occupies residues 276 to 296; that stretch reads FVLITIYNAVLVGKIHFIVPC. Residues 297–323 lie on the Extracellular side of the membrane; that stretch reads SVHTEDMTGYNSFCCNHTKAHLFSKLA. N-linked (GlcNAc...) asparagine glycosylation occurs at Asn-312. A helical membrane pass occupies residues 324-344; the sequence is ITYLCFLGVYGLTCLYTLYWL. At 345-806 the chain is on the cytoplasmic side; sequence FRRPLKEYSF…VEVRDKLKED (462 aa). LRR repeat units lie at residues 544 to 566, 569 to 589, 593 to 614, 616 to 637, 641 to 662, 664 to 685, 687 to 708, 710 to 731, 733 to 754, and 756 to 777; these read LKSL…VADV, HLQK…NALK, LVKE…VFSL, NLQV…ISLQ, KLSV…IRKL, GLEE…LFLC, KLRH…IGVL, LLQY…LFFC, KLKT…VGSL, and CLVK…LGNC.

It belongs to the LRRC8 family. In terms of assembly, heterohexamer; oligomerizes with other LRRC8 proteins (lrrc8a, lrrc8c, lrrc8d and/or lrrc8b) to form a heterohexamer. Detected in a channel complex that contains lrrc8a, lrrc8c and lrrc8e. In vivo, the subunit composition may depend primarily on expression levels, and heterooligomeric channels containing various proportions of the different LRRC8 proteins may coexist.

The protein resides in the cell membrane. Its subcellular location is the endoplasmic reticulum membrane. The protein localises to the lysosome membrane. It carries out the reaction chloride(in) = chloride(out). It catalyses the reaction iodide(out) = iodide(in). The enzyme catalyses taurine(out) = taurine(in). The catalysed reaction is 2',3'-cGAMP(out) = 2',3'-cGAMP(in). Its function is as follows. Non-essential component of the volume-regulated anion channel (VRAC, also named VSOAC channel), an anion channel required to maintain a constant cell volume in response to extracellular or intracellular osmotic changes. The VRAC channel conducts iodide better than chloride and can also conduct organic osmolytes like taurine. Mediates efflux of amino acids, such as aspartate, in response to osmotic stress. The VRAC channel also mediates transport of immunoreactive cyclic dinucleotide GMP-AMP (2'-3'-cGAMP), an immune messenger produced in response to DNA virus in the cytosol. Channel activity requires lrrc8a plus at least one other family member (lrrc8b, lrrc8c, lrrc8d or lrrc8e); channel characteristics depend on the precise subunit composition. Also plays a role in lysosome homeostasis by forming functional lysosomal VRAC channels in response to low cytoplasmic ionic strength condition: lysosomal VRAC channels are necessary for the formation of large lysosome-derived vacuoles, which store and then expel excess water to maintain cytosolic water homeostasis. The sequence is that of Volume-regulated anion channel subunit LRRC8E from Xenopus tropicalis (Western clawed frog).